The primary structure comprises 351 residues: Uroporphyrinogen decarboxylase (351 aa).

Substrate contacts are provided by residues 25–29 (RQAGR), Asp74, Tyr151, Ser206, and His325.

The protein belongs to the uroporphyrinogen decarboxylase family. As to quaternary structure, homodimer.

The protein resides in the cytoplasm. It carries out the reaction uroporphyrinogen III + 4 H(+) = coproporphyrinogen III + 4 CO2. The protein operates within porphyrin-containing compound metabolism; protoporphyrin-IX biosynthesis; coproporphyrinogen-III from 5-aminolevulinate: step 4/4. Catalyzes the decarboxylation of four acetate groups of uroporphyrinogen-III to yield coproporphyrinogen-III. This is Uroporphyrinogen decarboxylase from Chlorobium phaeobacteroides (strain DSM 266 / SMG 266 / 2430).